Consider the following 459-residue polypeptide: ATP-dependent RNA helicase me31b (459 aa).

Residues 1-267 (MMTEKLNSGH…EINLMEELTL (267 aa)) form a recA-like domain 1 region. Residues Ser8 and Ser29 each carry the phosphoserine modification. Residues 58–86 (NEFEEFCLKRELLMGIFEKGWERPSPIQE) carry the Q motif motif. Residues 89-259 (IPIALSGKDV…EKHLREPYEI (171 aa)) form the Helicase ATP-binding domain. 102 to 109 (AKNGTGKT) provides a ligand contact to ATP. The DEAD box motif lies at 207-210 (DEAD). The segment at 264 to 431 (ELTLKGVTQY…PKVIDPALYV (168 aa)) is gyf binding. The Helicase C-terminal domain maps to 269-429 (GVTQYYAFVQ…PIPKVIDPAL (161 aa)). Residues 432–459 (ANVGASVGDTCNNSDLNNSANEEGNVSK) form a recA-like domain 2 region. Position 450 is a phosphoserine (Ser450).

This sequence belongs to the DEAD box helicase family. DDX6/DHH1 subfamily. As to quaternary structure, conserved component of different types of multiprotein ribonucleoprotein complexes (RNPs) that form distinct germ granules (P-body, nuage, sponge body or polar granules) and P-body-like neuronal RNPs. Consequently it interacts with a wide variety of proteins, some of which appear to be common interactive partners in almost all RNPs types i.e. cup and tral, whereas other interactions are specific to a germ granule/RNP. Core functional components in me31B-containing RNPs include RNA regulatory proteins (such as translational repressor, RNA-decapping and exonuclease proteins), RNA localization proteins and additional proteins depending on the biological context of the RNPs. In the P-body RNPs, interacts with at least the translation repressor proteins tral, cup and Edc3, and the mRNA localization factor yps. Interaction with tral or Edc3 is required for translation repression and possibly RNA decapping; binding to tral and Edc3 is mutually exclusive. In the nuage and germ plasm polar granule RNPs, interacts with at least tral, cup, and additional proteins required for assembly and function of the germ granules such as tud, vas and aub. Interacts (when dimethylated on Arg residues) with tud; interaction is RNA-independent. Component of the osk RNP complex, which is composed of at least me31B, exu, yps, aret/bruno, cup, and the mRNA of osk. Component of the nanos RNP complex, which is composed of at least smg, cup, tral, me31B, the CCR4-NOT complex members Rga/NOT2 and Caf1-55, and the mRNA of nanos (nos). Interacts with tral and piRNA pathway components papi and AGO3; promotes interaction between nuage RNPs and the piRNA-mediated transposon silencing. Forms a RNP containing at least me31B, eIF4E1, cup, tral and pAbp; this interaction is required for the translational silencing of maternal mRNAs during the maternal-to-zygotic transition. In the sponge body, forms a RNP containing at least me31B, exu, yps and the mRNA of osk; interactions with exu and yps are RNA dependent. Component of a neuronal RNP, at least composed of me31B, tral and Fmr1. Component of the Atx2-Not1 repressor complex, composed of at least me31B, Atx2, tyf and pAbp. Interacts (via the C-terminus) with Atx2, tyf, pAbp and Lsm12a. Interacts (via RecA-like domain 2) with 4EHP-GYF2 complex member Gyf (via the me31B binding motif). Interacts with 4E-T, Edc3 and Patr-1. Symmetrically dimethylated on arginine residues. Ubiquitously expressed throughout the brain (at protein level). Expressed in the olfactory system including the antennal lobes, projection neurons, local interneurons, mushroom-body Kenyon cells and glial cells (at protein level).

It localises to the cytoplasm. The protein localises to the cytoplasmic ribonucleoprotein granule. The protein resides in the P-body. It is found in the endoplasmic reticulum. Its subcellular location is the cell projection. It localises to the dendrite. The enzyme catalyses ATP + H2O = ADP + phosphate + H(+). ATP-dependent RNA helicase which is a core component of a variety of ribonucleoprotein complexes (RNPs) that play critical roles in translational repression and mRNA decapping during embryogenesis, oogenesis, neurogenesis and neurotransmission. Recruits core components and translational repressors to some RNP complexes, and mediates RNP aggregation into processing granules such as P-bodies. As part of a RNP complex containing tral, eIF4E1, cup, and pAbp, involved in RNP-mediated translational repression of maternal mRNAs during oogenesis and embryogenesis. As part of a RNP complex containing tral and the RNA localization factors exu and yps, mediates translational silencing of mRNAs such as osk/oskar and bcd/bicoid during their transport to the oocyte in order to prevent their translation until they reach their positional destinations. In neurons and possibly imaginal disks, involved in miRNA-mediated translational repression, possibly in association with components of the piRNA transposon silencing pathway. Involved in RNA localization and protein trafficking in the oocyte. As part of an ER-associated RNP containing tral, cup and yps, required for tral-dependent ER exit site formation and consequently efficient trafficking of proteins such as grk and yl through the secretory pathway. Component of neuron RNPs that mediate transport and translation of neuronal RNAs, including translation repression of synaptic transcripts in preparation for their dendritic targeting. As part of the Atx2-Not1 repressor complex promotes Not1-dependent post-transcriptional gene silencing in adult circadian pacemaker neurons in order to sustain high-amplitude circadian rhythms and Pdf cycling in a per-independent manner. Promotes the interaction between Atx2 and Not1 within the Atx2-Not1 RNP complex. Recruited to the 4EHP-GYF2 complex by Gyf, where it plays a role in 4EHP-GYF2 mediated translational repression and mRNA decay. This Drosophila melanogaster (Fruit fly) protein is ATP-dependent RNA helicase me31b (me31B).